The following is a 331-amino-acid chain: 4-hydroxythreonine-4-phosphate dehydrogenase (331 aa).

Residues His137 and Thr138 each contribute to the substrate site. A divalent metal cation contacts are provided by His167, His212, and His267. The substrate site is built by Lys275, Asn284, and Arg293.

This sequence belongs to the PdxA family. In terms of assembly, homodimer. Zn(2+) is required as a cofactor. It depends on Mg(2+) as a cofactor. Requires Co(2+) as cofactor.

It is found in the cytoplasm. The enzyme catalyses 4-(phosphooxy)-L-threonine + NAD(+) = 3-amino-2-oxopropyl phosphate + CO2 + NADH. The protein operates within cofactor biosynthesis; pyridoxine 5'-phosphate biosynthesis; pyridoxine 5'-phosphate from D-erythrose 4-phosphate: step 4/5. Its function is as follows. Catalyzes the NAD(P)-dependent oxidation of 4-(phosphooxy)-L-threonine (HTP) into 2-amino-3-oxo-4-(phosphooxy)butyric acid which spontaneously decarboxylates to form 3-amino-2-oxopropyl phosphate (AHAP). This chain is 4-hydroxythreonine-4-phosphate dehydrogenase, found in Yersinia pseudotuberculosis serotype I (strain IP32953).